The primary structure comprises 147 residues: Endoribonuclease YbeY (147 aa).

Residues His108, His112, and His118 each contribute to the Zn(2+) site.

It belongs to the endoribonuclease YbeY family. Zn(2+) serves as cofactor.

It is found in the cytoplasm. Single strand-specific metallo-endoribonuclease involved in late-stage 70S ribosome quality control and in maturation of the 3' terminus of the 16S rRNA. The sequence is that of Endoribonuclease YbeY from Sulfurovum sp. (strain NBC37-1).